We begin with the raw amino-acid sequence, 158 residues long: 6,7-dimethyl-8-ribityllumazine synthase (158 aa).

Residues Phe22, 57–59 (AYE), and 81–83 (AVI) each bind 5-amino-6-(D-ribitylamino)uracil. 86-87 (GT) contributes to the (2S)-2-hydroxy-3-oxobutyl phosphate binding site. His89 (proton donor) is an active-site residue. Position 114 (Phe114) interacts with 5-amino-6-(D-ribitylamino)uracil. A (2S)-2-hydroxy-3-oxobutyl phosphate-binding site is contributed by Arg128.

It belongs to the DMRL synthase family. As to quaternary structure, forms an icosahedral capsid composed of 60 subunits, arranged as a dodecamer of pentamers.

The enzyme catalyses (2S)-2-hydroxy-3-oxobutyl phosphate + 5-amino-6-(D-ribitylamino)uracil = 6,7-dimethyl-8-(1-D-ribityl)lumazine + phosphate + 2 H2O + H(+). The protein operates within cofactor biosynthesis; riboflavin biosynthesis; riboflavin from 2-hydroxy-3-oxobutyl phosphate and 5-amino-6-(D-ribitylamino)uracil: step 1/2. Its function is as follows. Catalyzes the formation of 6,7-dimethyl-8-ribityllumazine by condensation of 5-amino-6-(D-ribitylamino)uracil with 3,4-dihydroxy-2-butanone 4-phosphate. This is the penultimate step in the biosynthesis of riboflavin. The sequence is that of 6,7-dimethyl-8-ribityllumazine synthase from Pseudoalteromonas atlantica (strain T6c / ATCC BAA-1087).